The following is a 314-amino-acid chain: Methionyl-tRNA formyltransferase (314 aa).

111 to 114 (SLLP) contributes to the (6S)-5,6,7,8-tetrahydrofolate binding site.

Belongs to the Fmt family.

It catalyses the reaction L-methionyl-tRNA(fMet) + (6R)-10-formyltetrahydrofolate = N-formyl-L-methionyl-tRNA(fMet) + (6S)-5,6,7,8-tetrahydrofolate + H(+). Functionally, attaches a formyl group to the free amino group of methionyl-tRNA(fMet). The formyl group appears to play a dual role in the initiator identity of N-formylmethionyl-tRNA by promoting its recognition by IF2 and preventing the misappropriation of this tRNA by the elongation apparatus. The chain is Methionyl-tRNA formyltransferase from Coxiella burnetii (strain CbuK_Q154) (Coxiella burnetii (strain Q154)).